The following is a 346-amino-acid chain: Phosphoribosylformylglycinamidine cyclo-ligase (346 aa).

The protein belongs to the AIR synthase family.

The protein localises to the cytoplasm. It catalyses the reaction 2-formamido-N(1)-(5-O-phospho-beta-D-ribosyl)acetamidine + ATP = 5-amino-1-(5-phospho-beta-D-ribosyl)imidazole + ADP + phosphate + H(+). It participates in purine metabolism; IMP biosynthesis via de novo pathway; 5-amino-1-(5-phospho-D-ribosyl)imidazole from N(2)-formyl-N(1)-(5-phospho-D-ribosyl)glycinamide: step 2/2. In Bacillus thuringiensis subsp. konkukian (strain 97-27), this protein is Phosphoribosylformylglycinamidine cyclo-ligase.